A 106-amino-acid polypeptide reads, in one-letter code: Thiosulfate sulfurtransferase GlpE (106 aa).

The 89-residue stretch at 17–105 folds into the Rhodanese domain; that stretch reads EQKQAHLVDI…WHRANLPIEA (89 aa). Cysteine 65 (cysteine persulfide intermediate) is an active-site residue.

Belongs to the GlpE family.

It localises to the cytoplasm. The catalysed reaction is thiosulfate + hydrogen cyanide = thiocyanate + sulfite + 2 H(+). It catalyses the reaction thiosulfate + [thioredoxin]-dithiol = [thioredoxin]-disulfide + hydrogen sulfide + sulfite + 2 H(+). Functionally, transferase that catalyzes the transfer of sulfur from thiosulfate to thiophilic acceptors such as cyanide or dithiols. May function in a CysM-independent thiosulfate assimilation pathway by catalyzing the conversion of thiosulfate to sulfite, which can then be used for L-cysteine biosynthesis. In Vibrio cholerae serotype O1 (strain ATCC 39541 / Classical Ogawa 395 / O395), this protein is Thiosulfate sulfurtransferase GlpE.